The following is a 530-amino-acid chain: Phosphoenolpyruvate carboxykinase (ATP) (530 aa).

R60, Y195, and K201 together coordinate substrate. ATP contacts are provided by residues K201, H221, and 237-245 (GLSGTGKTT). K201 and H221 together coordinate Mn(2+). D258 is a binding site for Mn(2+). The ATP site is built by E286, R324, and S449. R324 contributes to the substrate binding site.

This sequence belongs to the phosphoenolpyruvate carboxykinase (ATP) family. Mn(2+) serves as cofactor.

Its subcellular location is the cytoplasm. It carries out the reaction oxaloacetate + ATP = phosphoenolpyruvate + ADP + CO2. It functions in the pathway carbohydrate biosynthesis; gluconeogenesis. In terms of biological role, involved in the gluconeogenesis. Catalyzes the conversion of oxaloacetate (OAA) to phosphoenolpyruvate (PEP) through direct phosphoryl transfer between the nucleoside triphosphate and OAA. In Geobacter metallireducens (strain ATCC 53774 / DSM 7210 / GS-15), this protein is Phosphoenolpyruvate carboxykinase (ATP).